A 565-amino-acid polypeptide reads, in one-letter code: Thiol:disulfide interchange protein DsbD (565 aa).

The signal sequence occupies residues 1-19; that stretch reads MAQRIFTLILLLCSTSVFA. Cystine bridges form between cysteine 122–cysteine 128 and cysteine 182–cysteine 304. Helical transmembrane passes span 163–183, 208–228, 243–263, 289–309, 323–343, 357–377, and 384–404; these read LPFS…TPCV, LLTF…GLVV, YVLI…FGLF, GVFI…TAPL, WLGG…LMLI, WMEQ…VFLL, and IWGL…AFIT. The 132-residue stretch at 434-565 folds into the Thioredoxin domain; sequence WAFGETHTAQ…FSAHLRDRQP (132 aa). A disulfide bond links cysteine 480 and cysteine 483.

This sequence belongs to the thioredoxin family. DsbD subfamily.

It localises to the cell inner membrane. It carries out the reaction [protein]-dithiol + NAD(+) = [protein]-disulfide + NADH + H(+). The enzyme catalyses [protein]-dithiol + NADP(+) = [protein]-disulfide + NADPH + H(+). Functionally, required to facilitate the formation of correct disulfide bonds in some periplasmic proteins and for the assembly of the periplasmic c-type cytochromes. Acts by transferring electrons from cytoplasmic thioredoxin to the periplasm. This transfer involves a cascade of disulfide bond formation and reduction steps. This chain is Thiol:disulfide interchange protein DsbD, found in Escherichia coli O6:K15:H31 (strain 536 / UPEC).